We begin with the raw amino-acid sequence, 193 residues long: MKSLFRPMIVIFAVLAALTGLAYPAVMTAFGQTVFHNEANGSMIAKNGKVVGSRLIGQQFDAPQYFWGRLSATSPMPYNAQGSSGSNLGPINPALADEVKGRLAALQAAGHQPAGVAVPVDLVTSSGSGLDPEISPAAAAYQIERVAAARKMNVSDVAAIVDRYTRGRQFGVFGEARVNVLELNLALDDAQRG.

Residues 7–27 (PMIVIFAVLAALTGLAYPAVM) form a helical membrane-spanning segment.

This sequence belongs to the KdpC family. The system is composed of three essential subunits: KdpA, KdpB and KdpC.

It localises to the cell inner membrane. Part of the high-affinity ATP-driven potassium transport (or Kdp) system, which catalyzes the hydrolysis of ATP coupled with the electrogenic transport of potassium into the cytoplasm. This subunit acts as a catalytic chaperone that increases the ATP-binding affinity of the ATP-hydrolyzing subunit KdpB by the formation of a transient KdpB/KdpC/ATP ternary complex. This chain is Potassium-transporting ATPase KdpC subunit, found in Paraburkholderia phymatum (strain DSM 17167 / CIP 108236 / LMG 21445 / STM815) (Burkholderia phymatum).